The sequence spans 414 residues: tRNA(Ile)-lysidine synthase (414 aa).

ATP is bound at residue serine 13 to serine 18.

It belongs to the tRNA(Ile)-lysidine synthase family.

It localises to the cytoplasm. It catalyses the reaction cytidine(34) in tRNA(Ile2) + L-lysine + ATP = lysidine(34) in tRNA(Ile2) + AMP + diphosphate + H(+). Ligates lysine onto the cytidine present at position 34 of the AUA codon-specific tRNA(Ile) that contains the anticodon CAU, in an ATP-dependent manner. Cytidine is converted to lysidine, thus changing the amino acid specificity of the tRNA from methionine to isoleucine. In Thermotoga sp. (strain RQ2), this protein is tRNA(Ile)-lysidine synthase.